Consider the following 205-residue polypeptide: Large ribosomal subunit protein uL4 (205 aa).

This sequence belongs to the universal ribosomal protein uL4 family. Part of the 50S ribosomal subunit.

One of the primary rRNA binding proteins, this protein initially binds near the 5'-end of the 23S rRNA. It is important during the early stages of 50S assembly. It makes multiple contacts with different domains of the 23S rRNA in the assembled 50S subunit and ribosome. Functionally, forms part of the polypeptide exit tunnel. The sequence is that of Large ribosomal subunit protein uL4 from Dinoroseobacter shibae (strain DSM 16493 / NCIMB 14021 / DFL 12).